The chain runs to 257 residues: uncharacterized protein (257 aa).

A helical membrane pass occupies residues Ile6 to Phe26.

This sequence belongs to the staphylococcal tandem lipoprotein family.

It is found in the cell membrane. This is an uncharacterized protein from Staphylococcus aureus (strain COL).